The following is an 82-amino-acid chain: Small ribosomal subunit protein bS16 (82 aa).

Belongs to the bacterial ribosomal protein bS16 family.

The protein is Small ribosomal subunit protein bS16 of Vibrio cholerae serotype O1 (strain ATCC 39541 / Classical Ogawa 395 / O395).